A 158-amino-acid chain; its full sequence is Protein GLUTAMINE DUMPER 1 (158 aa).

At 1–36 (MRPLSVQSKFEDVATSTSVNHHGVTPQSPWHSPVPY) the chain is on the extracellular side. Residues 37–57 (LFGGLAAMLGLIAFALLILAC) form a helical membrane-spanning segment. The Cytoplasmic portion of the chain corresponds to 58–158 (SYWRLSSSGE…DTGETTTTSH (101 aa)). The disordered stretch occupies residues 65–85 (SGEEDGQNVDEEKESRSGDKA). Residues 66-76 (GEEDGQNVDEE) are compositionally biased toward acidic residues. Residues 96 to 100 (VIMAG) carry the VIMAG motif. Residues 126–158 (ISQEESVAKEEEKMREGEEEKVKDTGETTTTSH) are disordered. The span at 131–151 (SVAKEEEKMREGEEEKVKDTG) shows a compositional bias: basic and acidic residues.

It belongs to the GLUTAMINE DUMPER 1 (TC 9.B.60) family. As to quaternary structure, interacts with LOG2. In terms of processing, ubiquitinated by LOG2 (in vitro). In terms of tissue distribution, expressed in the vascular tissues and in hydathodes. Expressed in the phloem and xylem (at the protein level).

The protein resides in the cell membrane. In terms of biological role, probable subunit of an amino acid transporter involved in the regulation of the amino acid metabolism. Stimulates amino acid export by activating nonselective amino acid facilitators. Required the interaction with the RING-type E3 ubiquitin-protein ligase LOG2 to fulfill its function. Plays a role in the Gln export at hydathodes, at xylem parenchyma into xylem sap and from mesophyll into leaf apoplasm. Acts upstream genes involved in the salicylic acid (SA) pathway and in the geminivirus-host interaction. This Arabidopsis thaliana (Mouse-ear cress) protein is Protein GLUTAMINE DUMPER 1 (GDU1).